A 229-amino-acid polypeptide reads, in one-letter code: Potassium/proton antiporter CemA (229 aa).

3 helical membrane passes run 7-27 (FTPL…SLSF), 114-134 (IISF…LVIL), and 190-210 (ISGL…YWIF).

This sequence belongs to the CemA family.

It localises to the plastid. The protein localises to the chloroplast inner membrane. The catalysed reaction is K(+)(in) + H(+)(out) = K(+)(out) + H(+)(in). Contributes to K(+)/H(+) antiport activity by supporting proton efflux to control proton extrusion and homeostasis in chloroplasts in a light-dependent manner to modulate photosynthesis. Prevents excessive induction of non-photochemical quenching (NPQ) under continuous-light conditions. Indirectly promotes efficient inorganic carbon uptake into chloroplasts. This chain is Potassium/proton antiporter CemA, found in Jasminum nudiflorum (Winter jasmine).